The chain runs to 88 residues: Sec-independent protein translocase protein TatA (88 aa).

A helical transmembrane segment spans residues 1 to 21 (MGSLSPWHWVVLVVVVVLLFG). Over residues 49-71 (ENQAQASALETPMQNPTVVQSQR) the composition is skewed to polar residues. Residues 49–88 (ENQAQASALETPMQNPTVVQSQRVVPPWSTEQDHTEARPA) form a disordered region. Positions 79–88 (EQDHTEARPA) are enriched in basic and acidic residues.

The protein belongs to the TatA/E family. As to quaternary structure, the Tat system comprises two distinct complexes: a TatABC complex, containing multiple copies of TatA, TatB and TatC subunits, and a separate TatA complex, containing only TatA subunits. Substrates initially bind to the TatABC complex, which probably triggers association of the separate TatA complex to form the active translocon.

The protein resides in the cell membrane. In terms of biological role, part of the twin-arginine translocation (Tat) system that transports large folded proteins containing a characteristic twin-arginine motif in their signal peptide across membranes. TatA could form the protein-conducting channel of the Tat system. The sequence is that of Sec-independent protein translocase protein TatA from Mycobacterium leprae (strain TN).